Reading from the N-terminus, the 1227-residue chain is DNA-directed RNA polymerase subunit beta (1227 aa).

Belongs to the RNA polymerase beta chain family. In terms of assembly, the RNAP catalytic core consists of 2 alpha, 1 beta, 1 beta' and 1 omega subunit. When a sigma factor is associated with the core the holoenzyme is formed, which can initiate transcription.

It carries out the reaction RNA(n) + a ribonucleoside 5'-triphosphate = RNA(n+1) + diphosphate. In terms of biological role, DNA-dependent RNA polymerase catalyzes the transcription of DNA into RNA using the four ribonucleoside triphosphates as substrates. This Chloroflexus aggregans (strain MD-66 / DSM 9485) protein is DNA-directed RNA polymerase subunit beta.